The following is a 311-amino-acid chain: Olfactory receptor 10D1B (311 aa).

Residues 1–24 are Extracellular-facing; that stretch reads MKNLSVVTQFILLGIPHTEGVETM. A helical membrane pass occupies residues 25–45; it reads LFVLFFSFYIFTLVGNLLILL. Topologically, residues 46 to 54 are cytoplasmic; it reads AIVSSSRLH. Residues 55–75 traverse the membrane as a helical segment; that stretch reads TPMYFFLCQLSVCDIFFPSVS. Topologically, residues 76–95 are extracellular; the sequence is SPKMLFYLSGNTPAISYAGC. A disulfide bridge links Cys-95 with Cys-187. A helical membrane pass occupies residues 96–116; the sequence is VSQLFFYHFLGGTECFLYTVM. At 117 to 137 the chain is on the cytoplasmic side; it reads AYDRFVAICYPLRYSVIMSHR. A helical transmembrane segment spans residues 138–158; that stretch reads ICAFLAMGTAVFGCIHSTFLT. At 159 to 192 the chain is on the extracellular side; it reads TLTFQLPYCGPKDVNYYFCDIPVVMKLACADTST. The chain crosses the membrane as a helical span at residues 193–213; sequence LEMVGFISVGLMPLSCFFFIL. Over 214–237 the chain is Cytoplasmic; it reads TSYSCIVRSILQIRSTEGRHRAFS. A helical transmembrane segment spans residues 238–258; the sequence is TCSAHFTAILLFYMPVIFIYL. Over 259-271 the chain is Extracellular; the sequence is RPTPSPWLDATVQ. The chain crosses the membrane as a helical span at residues 272-288; that stretch reads ILNNLVTPMLNPLIYSL. Residues 289–311 are Cytoplasmic-facing; it reads RNKEVKSSLWTVLHLLCFLPKHL.

Belongs to the G-protein coupled receptor 1 family.

The protein resides in the cell membrane. Functionally, odorant receptor. The chain is Olfactory receptor 10D1B from Mus musculus (Mouse).